Here is a 571-residue protein sequence, read N- to C-terminus: Hemagglutinin-neuraminidase (571 aa).

Over 1-26 (MDRAVSRVALENEEREAKNTWRFVFR) the chain is Intravirion. The chain crosses the membrane as a helical span at residues 27 to 47 (IAILLLIVITLAISAAALVYS). The Virion surface segment spans residues 48 to 571 (MEASTPGDLV…LVEILKNDGV (524 aa)). N119 carries an N-linked (GlcNAc...) asparagine; by host glycan. Positions 124-152 (GAPVHDPDYIGGIGKELIVDDASDVTSFY) are important for interaction with fusion/F protein. 3 disulfides stabilise this stretch: C172/C196, C186/C247, and C238/C251. Positions 234–239 (NRKSCS) are involved in neuraminidase activity. N341 and N433 each carry an N-linked (GlcNAc...) asparagine; by host glycan. 2 disulfides stabilise this stretch: C344/C461 and C455/C465. 3 N-linked (GlcNAc...) asparagine; by host glycosylation sites follow: N481, N508, and N538.

The protein belongs to the paramyxoviruses hemagglutinin-neuraminidase family. In terms of assembly, homotetramer; composed of disulfide-linked homodimers. Interacts with F protein trimer. Interacts with host CG-1B; this interaction inhibits viral adsorption and replication rather than internalization.

The protein localises to the virion membrane. It is found in the host cell membrane. The enzyme catalyses Hydrolysis of alpha-(2-&gt;3)-, alpha-(2-&gt;6)-, alpha-(2-&gt;8)- glycosidic linkages of terminal sialic acid residues in oligosaccharides, glycoproteins, glycolipids, colominic acid and synthetic substrates.. Functionally, mediates the viral entry into the host cell together with fusion/F protein. Attaches the virus to sialic acid-containing cell receptors and thereby initiates infection. Binding of HN protein to the receptor induces a conformational change that allows the F protein to trigger virion/cell membranes fusion. In terms of biological role, neuraminidase activity ensures the efficient spread of the virus by dissociating the mature virions from the neuraminic acid containing glycoproteins. In Gallus gallus (Chicken), this protein is Hemagglutinin-neuraminidase (HN).